The primary structure comprises 156 residues: MRLRLICVGQKMPDWVSAGYNDYARRMPPELPLELTEIPMAHRGKNPDISRLMQRESDAILSAAGTRDRVVALEVGGRPWSTEKLASQLENWQQDGRDVAFLVGGPDGLADACRQRADQQWSLSPLTLPHPLVRILLAEQLYRAWTITRNHPYHRA.

S-adenosyl-L-methionine contacts are provided by residues L73, G104, and 123–128 (LSPLTL).

It belongs to the RNA methyltransferase RlmH family. In terms of assembly, homodimer.

The protein localises to the cytoplasm. It carries out the reaction pseudouridine(1915) in 23S rRNA + S-adenosyl-L-methionine = N(3)-methylpseudouridine(1915) in 23S rRNA + S-adenosyl-L-homocysteine + H(+). Its function is as follows. Specifically methylates the pseudouridine at position 1915 (m3Psi1915) in 23S rRNA. In Marinobacter nauticus (strain ATCC 700491 / DSM 11845 / VT8) (Marinobacter aquaeolei), this protein is Ribosomal RNA large subunit methyltransferase H.